The chain runs to 181 residues: Early E3 20.3 kDa glycoprotein (181 aa).

Residues asparagine 29, asparagine 57, asparagine 70, and asparagine 75 are each glycosylated (N-linked (GlcNAc...) asparagine; by host).

Belongs to the adenoviridae E3_20 family.

Functionally, E3 proteins seem to be dispensable for virus growth in tissue culture cells. They are potentially important for virus growth under special conditions; E3 region may help adenoviruses to evade the immune surveillance of the host. This Homo sapiens (Human) protein is Early E3 20.3 kDa glycoprotein.